Here is a 96-residue protein sequence, read N- to C-terminus: Ribonuclease P protein component 1 (96 aa).

This sequence belongs to the eukaryotic/archaeal RNase P protein component 1 family. As to quaternary structure, consists of a catalytic RNA component and at least 5 protein subunits.

The protein localises to the cytoplasm. The catalysed reaction is Endonucleolytic cleavage of RNA, removing 5'-extranucleotides from tRNA precursor.. Its function is as follows. Part of ribonuclease P, a protein complex that generates mature tRNA molecules by cleaving their 5'-ends. This chain is Ribonuclease P protein component 1, found in Methanococcus maripaludis (strain DSM 14266 / JCM 13030 / NBRC 101832 / S2 / LL).